The chain runs to 391 residues: Putative gustatory receptor 98a (391 aa).

Topologically, residues 1–31 are cytoplasmic; sequence MEQMSGELHAASLLYMRRLMKCLGMLPFGQN. The helical transmembrane segment at 32 to 52 threads the bilayer; that stretch reads LFSKGFCYVLLFVSLGFSSYW. Over 53–74 the chain is Extracellular; that stretch reads RFSFDYEFDYDFLNDRFSSTID. Residues 75–95 traverse the membrane as a helical segment; the sequence is LSNFVALVLGHAIIVLELLWG. Residues 96 to 128 lie on the Cytoplasmic side of the membrane; it reads NCSKDVDRQLQAIHSQIKLQLGTSNSTDRVRRY. The helical transmembrane segment at 129–149 threads the bilayer; the sequence is CNWIYGSLIIRWLIFIVVTIY. The Extracellular portion of the chain corresponds to 150–173; the sequence is SNRALTINATYSELVFLARFSEFT. N-linked (GlcNAc...) asparagine glycosylation is present at Asn157. A helical membrane pass occupies residues 174–194; it reads LYCAVILFIYQELIVGGSNVL. Over 195-239 the chain is Cytoplasmic; the sequence is DELYRTRYEMWSIRRLSLQKLAKLQAIHNSLWQAIRCLECYFQLS. A helical membrane pass occupies residues 240-260; it reads LITLLMKFFIDTSALPYWLYL. At 261-272 the chain is on the extracellular side; it reads SRVEHTRVAVQH. The chain crosses the membrane as a helical span at residues 273-293; that stretch reads YVATVECIKLLEIVVPCYLCT. Over 294-347 the chain is Cytoplasmic; that stretch reads RCDAMQRKFLSMFYTVTTDRRSSQLNAALRSLNLQLSQEKYKFSAGGMVDINTE. Residues 348-368 form a helical membrane-spanning segment; that stretch reads MLGKFFFGMISYIVICIQFSI. Residues 369–391 are Extracellular-facing; sequence NFRAKKMSNEQMSQNITSTSAPI. Asn383 carries N-linked (GlcNAc...) asparagine glycosylation.

This sequence belongs to the insect chemoreceptor superfamily. Gustatory receptor (GR) family. Gr2a subfamily.

It localises to the cell membrane. In terms of biological role, probable gustatory receptor which mediates acceptance or avoidance behavior, depending on its substrates. The protein is Putative gustatory receptor 98a (Gr98a) of Drosophila melanogaster (Fruit fly).